Consider the following 120-residue polypeptide: Spermidine export protein MdtJ (120 aa).

Transmembrane regions (helical) follow at residues 1 to 21 (MFYW…TLSM), 31 to 51 (TGFI…AFAV), 54 to 74 (IALG…ITLF), and 81 to 101 (ESLS…IVLI).

It belongs to the drug/metabolite transporter (DMT) superfamily. Small multidrug resistance (SMR) (TC 2.A.7.1) family. MdtJ subfamily. In terms of assembly, forms a complex with MdtI.

Its subcellular location is the cell inner membrane. Catalyzes the excretion of spermidine. The protein is Spermidine export protein MdtJ of Klebsiella pneumoniae subsp. pneumoniae (strain ATCC 700721 / MGH 78578).